The following is a 102-amino-acid chain: Acid shock protein (102 aa).

An N-terminal signal peptide occupies residues 1–21 (MKKVLALVVAAAMGLSSAAFA). Residues 22–58 (AETAITPAPTATTTKAAPAKTTHHKKQHKAAPAQKAQ) constitute a propeptide that is removed on maturation. Positions 26–41 (ITPAPTATTTKAAPAK) are enriched in low complexity. The disordered stretch occupies residues 26–102 (ITPAPTATTT…PAKPAAQPAA (77 aa)). Residues 80 to 90 (AAKKHAKKHSH) are compositionally biased toward basic residues. Positions 91–102 (QQPAKPAAQPAA) are enriched in low complexity.

Belongs to the Asr family. Post-translationally, proteolytic processing gives rise to the active protein.

It localises to the periplasm. Required for growth and/or survival at acidic conditions. This chain is Acid shock protein, found in Escherichia coli O81 (strain ED1a).